Reading from the N-terminus, the 767-residue chain is Cation/H(+) antiporter 27 (767 aa).

11 helical membrane-spanning segments follow: residues 39–59 (LPLL…FQFL), 63–83 (FGKF…PSVI), 99–119 (VYII…ITTC), 135–155 (INGI…AILI), 173–193 (HVAI…LSSL), 205–225 (LASM…NIAI), 242–262 (VLQM…MLWM), 280–300 (ICVL…PYFF), 323–343 (IGCF…GLNI), 371–391 (IALP…VGFI), and 415–435 (KSFG…IVIV).

Belongs to the monovalent cation:proton antiporter 2 (CPA2) transporter (TC 2.A.37) family. CHX (TC 2.A.37.4) subfamily. As to expression, specifically expressed in pollen.

It is found in the membrane. Functionally, may operate as a cation/H(+) antiporter. This chain is Cation/H(+) antiporter 27 (CHX27), found in Arabidopsis thaliana (Mouse-ear cress).